Reading from the N-terminus, the 1184-residue chain is DNA-directed RNA polymerase subunit beta' (1184 aa).

The Zn(2+) site is built by cysteine 60, cysteine 62, cysteine 75, and cysteine 78. 3 residues coordinate Mg(2+): aspartate 449, aspartate 451, and aspartate 453. Positions 794, 867, 874, and 877 each coordinate Zn(2+).

This sequence belongs to the RNA polymerase beta' chain family. As to quaternary structure, the RNAP catalytic core consists of 2 alpha, 1 beta, 1 beta' and 1 omega subunit. When a sigma factor is associated with the core the holoenzyme is formed, which can initiate transcription. Mg(2+) is required as a cofactor. It depends on Zn(2+) as a cofactor.

It carries out the reaction RNA(n) + a ribonucleoside 5'-triphosphate = RNA(n+1) + diphosphate. In terms of biological role, DNA-dependent RNA polymerase catalyzes the transcription of DNA into RNA using the four ribonucleoside triphosphates as substrates. The chain is DNA-directed RNA polymerase subunit beta' from Thermoanaerobacter sp. (strain X514).